The following is an 806-amino-acid chain: Volume-regulated anion channel subunit LRRC8E (806 aa).

Residues Met-1–Pro-22 are Cytoplasmic-facing. The helical transmembrane segment at Trp-23 to Cys-43 threads the bilayer. The Extracellular portion of the chain corresponds to Thr-44–Lys-130. Cysteines 54 and 311 form a disulfide. N-linked (GlcNAc...) asparagine glycosylation is found at Asn-57 and Asn-80. Positions Gln-75–Leu-104 are disordered. The chain crosses the membrane as a helical span at residues Tyr-131–Phe-151. Residues Lys-152–Lys-275 lie on the Cytoplasmic side of the membrane. The segment at Glu-182–Leu-217 is disordered. Positions Ser-188–Phe-207 are enriched in basic and acidic residues. The helical transmembrane segment at Phe-276–Cys-296 threads the bilayer. The Extracellular segment spans residues Ser-297–Ala-323. N-linked (GlcNAc...) asparagine glycosylation occurs at Asn-312. The chain crosses the membrane as a helical span at residues Ile-324–Leu-344. At Phe-345–Asp-806 the chain is on the cytoplasmic side. LRR repeat units lie at residues His-569–Lys-589, Leu-593–Leu-614, Asn-616–Gln-637, Lys-641–Leu-662, Gly-664–Cys-685, Lys-687–Leu-708, Leu-710–Cys-731, Lys-733–Leu-754, and Cys-756–Cys-777.

The protein belongs to the LRRC8 family. In terms of assembly, heterohexamer; oligomerizes with other LRRC8 proteins (lrrc8a, lrrc8c, lrrc8d and/or lrrc8b) to form a heterohexamer. Detected in a channel complex that contains lrrc8a, lrrc8c and lrrc8e. In vivo, the subunit composition may depend primarily on expression levels, and heterooligomeric channels containing various proportions of the different LRRC8 proteins may coexist.

The protein resides in the cell membrane. It localises to the endoplasmic reticulum membrane. It is found in the lysosome membrane. The catalysed reaction is chloride(in) = chloride(out). The enzyme catalyses iodide(out) = iodide(in). It catalyses the reaction taurine(out) = taurine(in). It carries out the reaction 2',3'-cGAMP(out) = 2',3'-cGAMP(in). Functionally, non-essential component of the volume-regulated anion channel (VRAC, also named VSOAC channel), an anion channel required to maintain a constant cell volume in response to extracellular or intracellular osmotic changes. The VRAC channel conducts iodide better than chloride and can also conduct organic osmolytes like taurine. Mediates efflux of amino acids, such as aspartate, in response to osmotic stress. The VRAC channel also mediates transport of immunoreactive cyclic dinucleotide GMP-AMP (2'-3'-cGAMP), an immune messenger produced in response to DNA virus in the cytosol. Channel activity requires lrrc8a plus at least one other family member (lrrc8b, lrrc8c, lrrc8d or lrrc8e); channel characteristics depend on the precise subunit composition. Also plays a role in lysosome homeostasis by forming functional lysosomal VRAC channels in response to low cytoplasmic ionic strength condition: lysosomal VRAC channels are necessary for the formation of large lysosome-derived vacuoles, which store and then expel excess water to maintain cytosolic water homeostasis. The protein is Volume-regulated anion channel subunit LRRC8E of Xenopus laevis (African clawed frog).